Here is a 609-residue protein sequence, read N- to C-terminus: Proteasome-associated ATPase (609 aa).

The tract at residues 1–25 (MADSERSEAFGTPDDTPLSSNDAAE) is disordered. Residues 19–96 (SSNDAAELEQ…LREEVDRLGQ (78 aa)) are a coiled coil. 296-301 (GCGKTL) is an ATP binding site. The tract at residues 608-609 (YL) is docks into pockets in the proteasome alpha-ring.

Belongs to the AAA ATPase family. Homohexamer. Assembles into a hexameric ring structure that caps the 20S proteasome core. Strongly interacts with the prokaryotic ubiquitin-like protein Pup through a hydrophobic interface; the interacting region of ARC lies in its N-terminal coiled-coil domain. There is one Pup binding site per ARC hexamer ring. Upon ATP-binding, the C-terminus of ARC interacts with the alpha-rings of the proteasome core, possibly by binding to the intersubunit pockets.

It participates in protein degradation; proteasomal Pup-dependent pathway. ATPase which is responsible for recognizing, binding, unfolding and translocation of pupylated proteins into the bacterial 20S proteasome core particle. May be essential for opening the gate of the 20S proteasome via an interaction with its C-terminus, thereby allowing substrate entry and access to the site of proteolysis. Thus, the C-termini of the proteasomal ATPase may function like a 'key in a lock' to induce gate opening and therefore regulate proteolysis. The polypeptide is Proteasome-associated ATPase (Mycobacterium marinum (strain ATCC BAA-535 / M)).